The following is a 417-amino-acid chain: Putative plant UBX domain-containing protein 14 (417 aa).

The UBX domain maps to 335 to 415; that stretch reads DRSVVCSICV…GIANSMISVT (81 aa).

The chain is Putative plant UBX domain-containing protein 14 from Arabidopsis thaliana (Mouse-ear cress).